We begin with the raw amino-acid sequence, 78 residues long: D-alanyl carrier protein (78 aa).

The Carrier domain occupies 1–78; the sequence is MEFKEQVLDL…KIVEALEELR (78 aa). Position 36 is an O-(pantetheine 4'-phosphoryl)serine (serine 36).

It belongs to the DltC family. In terms of processing, 4'-phosphopantetheine is transferred from CoA to a specific serine of apo-DCP.

It is found in the cytoplasm. The protein operates within cell wall biogenesis; lipoteichoic acid biosynthesis. Its function is as follows. Carrier protein involved in the D-alanylation of lipoteichoic acid (LTA). The loading of thioester-linked D-alanine onto DltC is catalyzed by D-alanine--D-alanyl carrier protein ligase DltA. The DltC-carried D-alanyl group is further transferred to cell membrane phosphatidylglycerol (PG) by forming an ester bond, probably catalyzed by DltD. D-alanylation of LTA plays an important role in modulating the properties of the cell wall in Gram-positive bacteria, influencing the net charge of the cell wall. The protein is D-alanyl carrier protein of Staphylococcus haemolyticus (strain JCSC1435).